We begin with the raw amino-acid sequence, 1154 residues long: Paired amphipathic helix protein pst3 (1154 aa).

Disordered stretches follow at residues 1-71 (MDVM…RSVT) and 91-110 (SGKDGSISSQNAEGLSSSSN). The segment covering 9-27 (DSERDNPGDKVETQSDKNH) has biased composition (basic and acidic residues). 2 stretches are compositionally biased toward polar residues: residues 32–45 (SPSQSQSPVNTSLH) and 100–110 (QNAEGLSSSSN). Residues 111 to 181 (RPLDVNDALS…EGFNTFLPSG (71 aa)) enclose the PAH 1 domain. 2 disordered regions span residues 199-249 (GTPM…STEN) and 321-376 (DNVD…KTSR). The span at 228–241 (STSPTDSQPQPSAP) shows a compositional bias: low complexity. One can recognise a PAH 2 domain in the interval 252–322 (PRVDFNYAIA…EEFKLFLPDN (71 aa)). Polar residues-rich tracts occupy residues 323–337 (VDSTEPSTPNVQKSP) and 365–376 (AQISRSISKTSR). One can recognise a PAH 3 domain in the interval 403 to 472 (SPYAATQEEL…LWFSEFIRWS (70 aa)). The disordered stretch occupies residues 797-824 (NSNNTNVSFQTDETQTEDETMSDIHPDD).

Its subcellular location is the nucleus. The chain is Paired amphipathic helix protein pst3 (pst3) from Schizosaccharomyces pombe (strain 972 / ATCC 24843) (Fission yeast).